Reading from the N-terminus, the 128-residue chain is Adrenodoxin homolog (128 aa).

Residues 12–115 (EQIRIFFKTM…NAVFTVPRAT (104 aa)) enclose the 2Fe-2S ferredoxin-type domain. Cys-50, Cys-56, Cys-59, and Cys-96 together coordinate [2Fe-2S] cluster.

Belongs to the adrenodoxin/putidaredoxin family. Requires [2Fe-2S] cluster as cofactor.

It localises to the mitosome. Functionally, ferredoxins are iron-sulfur proteins that transfer electrons in a wide variety of metabolic reactions. The chain is Adrenodoxin homolog from Encephalitozoon cuniculi (strain GB-M1) (Microsporidian parasite).